A 691-amino-acid chain; its full sequence is DNA ligase (691 aa).

Residues 41–45 (DAEYD), 90–91 (SL), and glutamate 130 contribute to the NAD(+) site. Residue lysine 132 is the N6-AMP-lysine intermediate of the active site. NAD(+) contacts are provided by arginine 153, glutamate 190, lysine 307, and lysine 331. Zn(2+)-binding residues include cysteine 425, cysteine 428, cysteine 443, and cysteine 449. In terms of domain architecture, BRCT spans 610–691 (APQGVLAGKT…LHQLLEGNTP (82 aa)).

This sequence belongs to the NAD-dependent DNA ligase family. LigA subfamily. The cofactor is Mg(2+). Mn(2+) serves as cofactor.

The enzyme catalyses NAD(+) + (deoxyribonucleotide)n-3'-hydroxyl + 5'-phospho-(deoxyribonucleotide)m = (deoxyribonucleotide)n+m + AMP + beta-nicotinamide D-nucleotide.. In terms of biological role, DNA ligase that catalyzes the formation of phosphodiester linkages between 5'-phosphoryl and 3'-hydroxyl groups in double-stranded DNA using NAD as a coenzyme and as the energy source for the reaction. It is essential for DNA replication and repair of damaged DNA. The sequence is that of DNA ligase from Burkholderia lata (strain ATCC 17760 / DSM 23089 / LMG 22485 / NCIMB 9086 / R18194 / 383).